We begin with the raw amino-acid sequence, 205 residues long: Large ribosomal subunit protein uL3c (205 aa).

The segment at 129–154 is disordered; the sequence is SRGPMSHGSKNHRQPGSIGAGTTPGR.

It belongs to the universal ribosomal protein uL3 family. Part of the 50S ribosomal subunit.

The protein resides in the plastid. It localises to the chloroplast. Its function is as follows. One of the primary rRNA binding proteins, it binds directly near the 3'-end of the 23S rRNA, where it nucleates assembly of the 50S subunit. This Pyropia yezoensis (Susabi-nori) protein is Large ribosomal subunit protein uL3c (rpl3).